Here is a 181-residue protein sequence, read N- to C-terminus: Mannose-specific lectin (181 aa).

An N-terminal signal peptide occupies residues 1–30; the sequence is MGRTTSSPKAMMRIATVAAILTILASTCMA. Positions 31–140 constitute a Bulb-type lectin domain; it reads RNVLTNGEGL…DIWSTGTYRR (110 aa). Alpha-D-mannopyranose contacts are provided by Q56, D58, N60, Y64, W71, A72, N74, Q88, D90, N92, Y96, V103, W104, N107, N114, Q120, D122, N124, Y128, and W133. C59 and C83 are oxidised to a cystine.

Homodimer.

The protein resides in the secreted. In terms of biological role, mannose-specific lectin. Shows agglutinating activity towards rabbit erythrocytes. However, it does not show agglutinating activity towards human erythrocytes. Has insecticidal activity against the cotton leafworm S.littoralis and the peach potato aphid M.persicae. Also displays antiviral activity and therefore may contribute to defense against infections. The protein is Mannose-specific lectin of Allium sativum (Garlic).